The primary structure comprises 280 residues: DegV domain-containing protein TTE1491 (280 aa).

One can recognise a DegV domain in the interval 4–279; that stretch reads IAIVTDSLSD…PDAAGVFFEE (276 aa). The hexadecanoate site is built by Thr-61 and Ser-93.

In terms of biological role, may bind long-chain fatty acids, such as palmitate, and may play a role in lipid transport or fatty acid metabolism. This is DegV domain-containing protein TTE1491 from Caldanaerobacter subterraneus subsp. tengcongensis (strain DSM 15242 / JCM 11007 / NBRC 100824 / MB4) (Thermoanaerobacter tengcongensis).